Reading from the N-terminus, the 151-residue chain is Dehydrin Rab16D (151 aa).

The segment at 1-138 is disordered; the sequence is MEYQGQHGGH…TADAGGEKKG (138 aa). Basic and acidic residues predominate over residues 39 to 51; it reads EPAREDKKTDGVL. Composition is skewed to low complexity over residues 90-105 and 117-132; these read GNNQ…TTTG and IATG…TADA.

It belongs to the plant dehydrin family.

This is Dehydrin Rab16D (RAB16D) from Oryza sativa subsp. indica (Rice).